The following is a 444-amino-acid chain: MREIVHLQAGQCGNQIGAKFWEVISDEHGIDPTGTYHGDSDLQLERINVYYNEATGGNYVPRAVLVDLEPGTMDSVRSGPFGQIFRPDNFVFGQSGAGNNWAKGHYTEGAELVDAVLDVVRKEAESCDCLQGFQLTHSLGGGTGSGMGTLLISKIREEFPDRIMNTFSVVPSPKVSDTVVEPYNATLSVHQLVENTDETYCIDNEALYDICFRTLKLTTPTYGDLNHLVSATMSGVTTCLRFPGQLNADLRKLAVNMVPFPRLHFFMPGFAPLTSRGSQQYRALTVPELTQQMFDAKNMMAACDPRHGRYLTVAAVFRGRMSMKEVDEQMLSVQSKNSSYFVEWIPNNVKTAVCDIPPRGLKMAATFIGNSTAIQELFKRISEQFTAMFRRKAFLHWYTGEGMDEMEFTEAESNMNDLVSEYQQYQDATAEEGEFEEEAEEEVA.

An MREI motif motif is present at residues 1–4; that stretch reads MREI. Positions 11, 69, 138, 142, 143, and 144 each coordinate GTP. E69 contributes to the Mg(2+) binding site. Residue S172 is modified to Phosphoserine; by CDK1. Positions 204 and 226 each coordinate GTP. E436 bears the 5-glutamyl polyglutamate mark.

The protein belongs to the tubulin family. Dimer of alpha and beta chains. A typical microtubule is a hollow water-filled tube with an outer diameter of 25 nm and an inner diameter of 15 nM. Alpha-beta heterodimers associate head-to-tail to form protofilaments running lengthwise along the microtubule wall with the beta-tubulin subunit facing the microtubule plus end conferring a structural polarity. Microtubules usually have 13 protofilaments but different protofilament numbers can be found in some organisms and specialized cells. It depends on Mg(2+) as a cofactor. Some glutamate residues at the C-terminus are polyglycylated, resulting in polyglycine chains on the gamma-carboxyl group. Glycylation is mainly limited to tubulin incorporated into axonemes (cilia and flagella) whereas glutamylation is prevalent in neuronal cells, centrioles, axonemes, and the mitotic spindle. Both modifications can coexist on the same protein on adjacent residues, and lowering polyglycylation levels increases polyglutamylation, and reciprocally. Cilia and flagella glycylation is required for their stability and maintenance. Flagella glycylation controls sperm motility. Post-translationally, some glutamate residues at the C-terminus are polyglutamylated, resulting in polyglutamate chains on the gamma-carboxyl group. Polyglutamylation plays a key role in microtubule severing by spastin (SPAST). SPAST preferentially recognizes and acts on microtubules decorated with short polyglutamate tails: severing activity by SPAST increases as the number of glutamates per tubulin rises from one to eight, but decreases beyond this glutamylation threshold. Glutamylation is also involved in cilia motility. In terms of processing, phosphorylated on Ser-172 by CDK1 during the cell cycle, from metaphase to telophase, but not in interphase. This phosphorylation inhibits tubulin incorporation into microtubules.

Its subcellular location is the cytoplasm. It is found in the cytoskeleton. Functionally, tubulin is the major constituent of microtubules, a cylinder consisting of laterally associated linear protofilaments composed of alpha- and beta-tubulin heterodimers. Microtubules grow by the addition of GTP-tubulin dimers to the microtubule end, where a stabilizing cap forms. Below the cap, tubulin dimers are in GDP-bound state, owing to GTPase activity of alpha-tubulin. The protein is Tubulin beta-4A chain (TUBB4A) of Bos taurus (Bovine).